A 273-amino-acid chain; its full sequence is Large ribosomal subunit protein uL2cy (273 aa).

Disordered regions lie at residues 1–22 (MAIHLYKTSTPSTRNGAVDSQV) and 224–273 (NPVD…RRRK).

Belongs to the universal ribosomal protein uL2 family. As to quaternary structure, part of the 50S ribosomal subunit.

It localises to the plastid. Its subcellular location is the chloroplast. In Chloranthus spicatus (Chulantree), this protein is Large ribosomal subunit protein uL2cy (rpl2-B).